The primary structure comprises 572 residues: Cleavage stimulation factor subunit 2 (572 aa).

A Phosphoserine modification is found at S14. The 79-residue stretch at 16–94 folds into the RRM domain; the sequence is RSVFVGNIPY…RALRVDNAAS (79 aa). Residues 108 to 248 are interactions with CSTF3 and SYMPK; that stretch reads APVIESPYGE…VNGAPPLMQA (141 aa). K189 is covalently cross-linked (Glycyl lysine isopeptide (Lys-Gly) (interchain with G-Cter in SUMO2)). A disordered region spans residues 208-230; sequence VHSAGPGSGSSVSMNQQNPQTPQ. At R308 the chain carries Omega-N-methylarginine. The interval 322–382 is disordered; it reads LGDAPNDPRG…RGGPLTEPRP (61 aa). A compositionally biased stretch (basic and acidic residues) spans 360-373; sequence PGHDSRGPPPHEMR. Residues 410–414 form a 1; approximate repeat; sequence IDARA. The 11 X 5 AA tandem repeats of M-E-A-R-[AG] stretch occupies residues 410–464; it reads IDARAMEARGLDARGLEARAMEARAMEARAMEARAMEARAMEVRGMEARSMDTRG. Repeat 2 spans residues 415–419; the sequence is MEARG. The 3; approximate repeat unit spans residues 420–424; the sequence is LDARG. One copy of the 4; approximate repeat lies at 425-429; sequence LEARA. 4 tandem repeats follow at residues 430–434, 435–439, 440–444, and 445–449. A 9; approximate repeat occupies 450–454; that stretch reads MEVRG. The stretch at 455–459 is repeat 10; the sequence is MEARS. The stretch at 460–464 is one 11; approximate repeat; sequence MDTRG. Omega-N-methylarginine occurs at positions 463 and 470. The tract at residues 509 to 572 is interaction with RPO2TC1; it reads IQGGGQPGGF…EQIQKSTGAP (64 aa). S519 is modified (phosphoserine).

In terms of assembly, the CSTF complex is composed of CSTF1 (50 kDa subunit), CSTF2 (64 kDa subunit) and CSTF3 (77 kDa subunit). CSTF2 directly interacts with CSTF3, SYMPK and RPO2TC1. Interacts with HSF1 in heat-stressed cells. Interacts with CPSF2, CPSF3 and FIP1L1. Interacts with DDX1.

Its subcellular location is the nucleus. Functionally, one of the multiple factors required for polyadenylation and 3'-end cleavage of mammalian pre-mRNAs. This subunit is directly involved in the binding to pre-mRNAs. This is Cleavage stimulation factor subunit 2 (CSTF2) from Bos taurus (Bovine).